Reading from the N-terminus, the 182-residue chain is MSRIGNIPVLIPNNVFVKKQDNIIYINGPLGKLNQKIIGDINIIINNNNIIVKRKHNDKKNRALHGLYRMLIYNMIKGVYNGFKKKLELIGVGFRAKNNSNILDLNIGYSHNIIIKLPKSITLEVKMEKNKNTQIILKSYDKQLLGIVAAKIRSLRKPEPYKGKGIRYINEYVIKKTGKSAK.

This sequence belongs to the universal ribosomal protein uL6 family. As to quaternary structure, part of the 50S ribosomal subunit.

This protein binds to the 23S rRNA, and is important in its secondary structure. It is located near the subunit interface in the base of the L7/L12 stalk, and near the tRNA binding site of the peptidyltransferase center. The chain is Large ribosomal subunit protein uL6 from Karelsulcia muelleri (strain GWSS) (Sulcia muelleri).